We begin with the raw amino-acid sequence, 391 residues long: Somatostatin receptor type 1 (391 aa).

The span at 1–11 shows a compositional bias: low complexity; sequence MFPNGTASSPS. Residues 1–49 are disordered; sequence MFPNGTASSPSSPSPSPGSCGEGGGSRGPGAGAADGMEEPGRNASQNGT. Residues 1–55 lie on the Extracellular side of the membrane; that stretch reads MFPNGTASSPSSPSPSPGSCGEGGGSRGPGAGAADGMEEPGRNASQNGTLSEGQG. N-linked (GlcNAc...) asparagine glycosylation occurs at asparagine 4. Residues 20–33 show a composition bias toward gly residues; that stretch reads CGEGGGSRGPGAGA. 2 N-linked (GlcNAc...) asparagine glycosylation sites follow: asparagine 43 and asparagine 47. The helical transmembrane segment at 56-83 threads the bilayer; it reads SAILISFIYSVVCLVGLCGNSMVIYVIL. The Cytoplasmic portion of the chain corresponds to 84–93; the sequence is RYAKMKTATN. Residues 94–119 traverse the membrane as a helical segment; it reads IYILNLAIADELLMLSVPFLVTSTLL. Residues 120-130 are Extracellular-facing; the sequence is RHWPFGALLCR. Cysteine 129 and cysteine 207 are disulfide-bonded. The helical transmembrane segment at 131–152 threads the bilayer; sequence LVLSVDAVNMFTSIYCLTVLSV. The Cytoplasmic segment spans residues 153 to 174; sequence DRYVAVVHPIKAARYRRPTVAK. The helical transmembrane segment at 175–195 threads the bilayer; the sequence is VVNLGVWVLSLLVILPIVVFS. Residues 196 to 218 lie on the Extracellular side of the membrane; that stretch reads RTAANSDGTVACNMLMPEPAQRW. Residues 219–243 form a helical membrane-spanning segment; the sequence is LVGFVLYTFLMGFLLPVGAICLCYV. Over 244–269 the chain is Cytoplasmic; that stretch reads LIIAKMRMVALKAGWQQRKRSERKIT. A helical membrane pass occupies residues 270-295; the sequence is LMVMMVVMVFVICWMPFYVVQLVNVF. The Extracellular segment spans residues 296–302; that stretch reads AEQDDAT. A helical membrane pass occupies residues 303 to 326; it reads VSQLSVILGYANSCANPILYGFLS. Topologically, residues 327–391 are cytoplasmic; sequence DNFKRSFQRI…GTCTSRITTL (65 aa). Cysteine 338 carries S-palmitoyl cysteine lipidation.

Belongs to the G-protein coupled receptor 1 family. In terms of assembly, interacts with SKB1.

It is found in the cell membrane. In terms of biological role, receptor for somatostatin with higher affinity for somatostatin-14 than -28. This receptor is coupled via pertussis toxin sensitive G proteins to inhibition of adenylyl cyclase. In addition it stimulates phosphotyrosine phosphatase and Na(+)/H(+) exchanger via pertussis toxin insensitive G proteins. This chain is Somatostatin receptor type 1 (SSTR1), found in Canis lupus familiaris (Dog).